The following is a 428-amino-acid chain: Enolase (428 aa).

Glutamine 165 contributes to the (2R)-2-phosphoglycerate binding site. Residue glutamate 207 is the Proton donor of the active site. Residues aspartate 244, glutamate 285, and aspartate 312 each contribute to the Mg(2+) site. Residues lysine 337, arginine 366, serine 367, and lysine 388 each coordinate (2R)-2-phosphoglycerate. Catalysis depends on lysine 337, which acts as the Proton acceptor.

The protein belongs to the enolase family. As to quaternary structure, component of the RNA degradosome, a multiprotein complex involved in RNA processing and mRNA degradation. Mg(2+) serves as cofactor.

Its subcellular location is the cytoplasm. The protein localises to the secreted. It localises to the cell surface. The enzyme catalyses (2R)-2-phosphoglycerate = phosphoenolpyruvate + H2O. It participates in carbohydrate degradation; glycolysis; pyruvate from D-glyceraldehyde 3-phosphate: step 4/5. In terms of biological role, catalyzes the reversible conversion of 2-phosphoglycerate (2-PG) into phosphoenolpyruvate (PEP). It is essential for the degradation of carbohydrates via glycolysis. In Coxiella burnetii (strain CbuK_Q154) (Coxiella burnetii (strain Q154)), this protein is Enolase.